The chain runs to 85 residues: Large ribosomal subunit protein bL27 (85 aa).

This sequence belongs to the bacterial ribosomal protein bL27 family.

The polypeptide is Large ribosomal subunit protein bL27 (Persephonella marina (strain DSM 14350 / EX-H1)).